The sequence spans 180 residues: Endoribonuclease YbeY (180 aa).

Zn(2+)-binding residues include His118, His122, and His128.

This sequence belongs to the endoribonuclease YbeY family. Zn(2+) serves as cofactor.

Its subcellular location is the cytoplasm. Functionally, single strand-specific metallo-endoribonuclease involved in late-stage 70S ribosome quality control and in maturation of the 3' terminus of the 16S rRNA. This Rhodococcus erythropolis (strain PR4 / NBRC 100887) protein is Endoribonuclease YbeY.